Here is a 155-residue protein sequence, read N- to C-terminus: Ribosome maturation factor RimP (155 aa).

This sequence belongs to the RimP family.

The protein resides in the cytoplasm. Its function is as follows. Required for maturation of 30S ribosomal subunits. The polypeptide is Ribosome maturation factor RimP (Staphylococcus carnosus (strain TM300)).